Here is a 201-residue protein sequence, read N- to C-terminus: MMSSRVSAPAPGALGPPLRRRFFARSVHEVAPELIGATLLVEGVGGVIVEVEAYHHTDPAAHSYGGQTARNAVMFGPPGFAYVYRSYGIHWCVNVVCEAEGSASAVLIRALQPTHGVEAMRARRGLDDARSLCSGPGKLAQALGISIAHNGLPLDAPPFAIHRRIGEPDIVTGPRIGITKAADYPWRFGLKGSRFVSVPFK.

It belongs to the DNA glycosylase MPG family.

This Rhodopseudomonas palustris (strain HaA2) protein is Putative 3-methyladenine DNA glycosylase.